The primary structure comprises 230 residues: Phosphoribosylaminoimidazole-succinocarboxamide synthase (230 aa).

Belongs to the SAICAR synthetase family.

It carries out the reaction 5-amino-1-(5-phospho-D-ribosyl)imidazole-4-carboxylate + L-aspartate + ATP = (2S)-2-[5-amino-1-(5-phospho-beta-D-ribosyl)imidazole-4-carboxamido]succinate + ADP + phosphate + 2 H(+). It functions in the pathway purine metabolism; IMP biosynthesis via de novo pathway; 5-amino-1-(5-phospho-D-ribosyl)imidazole-4-carboxamide from 5-amino-1-(5-phospho-D-ribosyl)imidazole-4-carboxylate: step 1/2. This chain is Phosphoribosylaminoimidazole-succinocarboxamide synthase, found in Thermotoga petrophila (strain ATCC BAA-488 / DSM 13995 / JCM 10881 / RKU-1).